The primary structure comprises 436 residues: UPF0229 protein mll9637 (436 aa).

The disordered stretch occupies residues 54 to 103 (IPRKGTGEPTFGDDKESGRRQHILPGNRTFSSGDLIPKPGGGGGYGSAAG).

Belongs to the UPF0229 family.

The protein is UPF0229 protein mll9637 of Mesorhizobium japonicum (strain LMG 29417 / CECT 9101 / MAFF 303099) (Mesorhizobium loti (strain MAFF 303099)).